Consider the following 103-residue polypeptide: Large ribosomal subunit protein uL23 (103 aa).

This sequence belongs to the universal ribosomal protein uL23 family. As to quaternary structure, part of the 50S ribosomal subunit. Contacts protein L29, and trigger factor when it is bound to the ribosome.

In terms of biological role, one of the early assembly proteins it binds 23S rRNA. One of the proteins that surrounds the polypeptide exit tunnel on the outside of the ribosome. Forms the main docking site for trigger factor binding to the ribosome. In Chlorobium chlorochromatii (strain CaD3), this protein is Large ribosomal subunit protein uL23.